A 135-amino-acid chain; its full sequence is Crustacean hyperglycemic hormones A* (135 aa).

The first 26 residues, 1–26 (MVSFRTMWSVVVVVVVASLASSGVQG), serve as a signal peptide directing secretion. At Q62 the chain carries Pyrrolidone carboxylic acid. Disulfide bonds link C68–C104, C84–C100, and C87–C113. Residue V133 is modified to Valine amide.

This sequence belongs to the arthropod CHH/MIH/GIH/VIH hormone family. In terms of tissue distribution, produced by the medulla terminalis X-organ in the eyestalks and transported to the sinus gland where they are stored and released.

The protein resides in the secreted. Hormone found in the sinus gland of isopods and decapods which controls the blood sugar level. Has a secretagogue action over the amylase released from the midgut gland. May act as a stress hormone and may be involved in the control of molting and reproduction. The chain is Crustacean hyperglycemic hormones A* (CHHA*) from Faxonius limosus (Spinycheek crayfish).